A 265-amino-acid polypeptide reads, in one-letter code: 4-hydroxy-tetrahydrodipicolinate reductase (265 aa).

NAD(+) contacts are provided by residues 7 to 12, Asp33, 96 to 98, and 120 to 123; these read GASGRM, GTT, and AANF. The active-site Proton donor/acceptor is the His153. His154 lines the (S)-2,3,4,5-tetrahydrodipicolinate pocket. Lys157 (proton donor) is an active-site residue. 163 to 164 serves as a coordination point for (S)-2,3,4,5-tetrahydrodipicolinate; the sequence is GT.

It belongs to the DapB family.

The protein resides in the cytoplasm. It catalyses the reaction (S)-2,3,4,5-tetrahydrodipicolinate + NAD(+) + H2O = (2S,4S)-4-hydroxy-2,3,4,5-tetrahydrodipicolinate + NADH + H(+). The enzyme catalyses (S)-2,3,4,5-tetrahydrodipicolinate + NADP(+) + H2O = (2S,4S)-4-hydroxy-2,3,4,5-tetrahydrodipicolinate + NADPH + H(+). The protein operates within amino-acid biosynthesis; L-lysine biosynthesis via DAP pathway; (S)-tetrahydrodipicolinate from L-aspartate: step 4/4. Functionally, catalyzes the conversion of 4-hydroxy-tetrahydrodipicolinate (HTPA) to tetrahydrodipicolinate. The chain is 4-hydroxy-tetrahydrodipicolinate reductase from Cupriavidus necator (strain ATCC 17699 / DSM 428 / KCTC 22496 / NCIMB 10442 / H16 / Stanier 337) (Ralstonia eutropha).